A 764-amino-acid chain; its full sequence is 5-methyltetrahydropteroyltriglutamate--homocysteine methyltransferase (764 aa).

Residues 16 to 19 (RELK) and Lys112 contribute to the 5-methyltetrahydropteroyltri-L-glutamate site. L-homocysteine-binding positions include 431–433 (IGS) and Glu484. Residues 431-433 (IGS) and Glu484 contribute to the L-methionine site. 5-methyltetrahydropteroyltri-L-glutamate is bound by residues 515 to 516 (RC) and Trp561. Asp599 serves as a coordination point for L-homocysteine. Asp599 contacts L-methionine. Glu605 serves as a coordination point for 5-methyltetrahydropteroyltri-L-glutamate. His641, Cys643, and Glu665 together coordinate Zn(2+). Residue His694 is the Proton donor of the active site. A Zn(2+)-binding site is contributed by Cys726.

It belongs to the vitamin-B12 independent methionine synthase family. Zn(2+) serves as cofactor.

It catalyses the reaction 5-methyltetrahydropteroyltri-L-glutamate + L-homocysteine = tetrahydropteroyltri-L-glutamate + L-methionine. The protein operates within amino-acid biosynthesis; L-methionine biosynthesis via de novo pathway; L-methionine from L-homocysteine (MetE route): step 1/1. Functionally, catalyzes the transfer of a methyl group from 5-methyltetrahydrofolate to homocysteine resulting in methionine formation. This is 5-methyltetrahydropteroyltriglutamate--homocysteine methyltransferase from Paraburkholderia xenovorans (strain LB400).